Consider the following 228-residue polypeptide: UPF0056 membrane protein MJ0972 (228 aa).

A run of 5 helical transmembrane segments spans residues 22–42, 68–88, 133–153, 163–183, and 201–221; these read FYIYGFVSLFITIDPIGLIPI, VVLLLFALFGNYIFGYFGITI, VPLAIPLISGPGAITTTMILI, GVVVLSILSAMLVSGIILSLT, and IMGLLLVAISVQIIFTGIVGL.

Belongs to the UPF0056 (MarC) family.

The protein localises to the cell membrane. This is UPF0056 membrane protein MJ0972 from Methanocaldococcus jannaschii (strain ATCC 43067 / DSM 2661 / JAL-1 / JCM 10045 / NBRC 100440) (Methanococcus jannaschii).